The primary structure comprises 259 residues: F-box/kelch-repeat protein At2g22050 (259 aa).

Basic residues predominate over residues 1–12; that stretch reads MSPSSKKFKKQS. Residues 1 to 29 form a disordered region; sequence MSPSSKKFKKQSSSKSVKPPLEDNDPSLP. An F-box domain is found at 28–76; it reads LPSFTSLPDEIVLDCLQRVPRSYYLNLCRVSKTLRSLVRSPELSRLRTL. A Kelch repeat occupies 142–186; that stretch reads EIYFVGGSFEPMSELWILDTRTGMFRQGPSMKVARTDEASVGVIN.

The polypeptide is F-box/kelch-repeat protein At2g22050 (Arabidopsis thaliana (Mouse-ear cress)).